Reading from the N-terminus, the 298-residue chain is MTYQEWRQFAEHVLMKNKENDPFLDVKSESVLLLQTVTKRSKASILAFSETVLTEVELQQLAQLLMRRAKGEPIAYILGEKAFWSLSLKVSEHTLIPRPDTEVLVEHALDFAKQRVTSAHVSGELSILDLGTGTGAIALALAAELTPLTQKCGINLNILGVDRIAEAVALAKDNAKQNELKVNFLQSVWFDALNPEIRFDLIVSNPPYIDKNDPHLTQGDVRFEPLSALVAAEEGYADIRHIIEQAPLFLKPQGALLLEHGWQQAEKVRSIFQKNLWHNVATLKDYSGNERVTLGCWR.

S-adenosyl-L-methionine-binding positions include 131-135 (GTGTG), D162, W189, and N205. 205 to 208 (NPPY) is a substrate binding site.

The protein belongs to the protein N5-glutamine methyltransferase family. PrmC subfamily.

The catalysed reaction is L-glutaminyl-[peptide chain release factor] + S-adenosyl-L-methionine = N(5)-methyl-L-glutaminyl-[peptide chain release factor] + S-adenosyl-L-homocysteine + H(+). Methylates the class 1 translation termination release factors RF1/PrfA and RF2/PrfB on the glutamine residue of the universally conserved GGQ motif. The polypeptide is Release factor glutamine methyltransferase (Pasteurella multocida (strain Pm70)).